Consider the following 400-residue polypeptide: Acetate kinase (400 aa).

N10 is a binding site for Mg(2+). Residue K17 participates in ATP binding. Residue R91 participates in substrate binding. D150 functions as the Proton donor/acceptor in the catalytic mechanism. Residues 210-214, 285-287, and 333-337 each bind ATP; these read HLGNG, DCR, and GIGEN. E387 is a binding site for Mg(2+).

This sequence belongs to the acetokinase family. As to quaternary structure, homodimer. Requires Mg(2+) as cofactor. Mn(2+) is required as a cofactor.

Its subcellular location is the cytoplasm. It catalyses the reaction acetate + ATP = acetyl phosphate + ADP. It participates in metabolic intermediate biosynthesis; acetyl-CoA biosynthesis; acetyl-CoA from acetate: step 1/2. Functionally, catalyzes the formation of acetyl phosphate from acetate and ATP. Can also catalyze the reverse reaction. This is Acetate kinase from Pectobacterium atrosepticum (strain SCRI 1043 / ATCC BAA-672) (Erwinia carotovora subsp. atroseptica).